A 748-amino-acid polypeptide reads, in one-letter code: Pentatricopeptide repeat-containing protein At3g13880 (748 aa).

PPR repeat units lie at residues 46–80 (DSEG…SLNP), 81–111 (CLYL…MPER), 112–146 (NIIS…NLKL), 147–181 (DKFT…GLSQ), 182–212 (QVFL…CDER), 213–247 (DQVS…GLNL), 248–285 (TTYA…GMEF), 286–316 (DIVV…MPSK), 317–356 (NVVT…GLEP), 357–391 (SPST…NFQS), 392–422 (DEFI…TSKQ), 423–457 (DIAS…HIRP), 458–492 (EEYT…GIDA), 493–523 (FTSV…VQNP), 524–558 (DVAT…GIKP), 559–589 (NQQA…MKND), and 595–629 (NEKH…DHPV). Residues 630 to 705 (TWRALLSSCR…EPALSWIVIG (76 aa)) are type E motif. The type E(+) motif stretch occupies residues 706–736 (NQTHSFAVADLSHPSSQMIYTMLETMDNVDF).

It belongs to the PPR family. PCMP-E subfamily.

In Arabidopsis thaliana (Mouse-ear cress), this protein is Pentatricopeptide repeat-containing protein At3g13880 (PCMP-E89).